A 217-amino-acid chain; its full sequence is MYGVSMDPKCSLILLSGGKGERFGANQPKQYLPFRGEPLILHALNMALRIPEISEIIVVCDVNYESIFEGYPVKFARPGTRRQDSVFSGLQQVANPWVLVHDGVRPFIYPDEVTELVTAAYQTGAATLVSNVPYTIKQRDPVKTLDRDALSIVHTPQCIKTQILLEGLERANQERITLVDDTQAAELLNLPVALVFNKHPQIKVTYPEDLTLAHALL.

It belongs to the IspD/TarI cytidylyltransferase family. IspD subfamily.

It carries out the reaction 2-C-methyl-D-erythritol 4-phosphate + CTP + H(+) = 4-CDP-2-C-methyl-D-erythritol + diphosphate. It functions in the pathway isoprenoid biosynthesis; isopentenyl diphosphate biosynthesis via DXP pathway; isopentenyl diphosphate from 1-deoxy-D-xylulose 5-phosphate: step 2/6. In terms of biological role, catalyzes the formation of 4-diphosphocytidyl-2-C-methyl-D-erythritol from CTP and 2-C-methyl-D-erythritol 4-phosphate (MEP). This Chlamydia abortus (strain DSM 27085 / S26/3) (Chlamydophila abortus) protein is 2-C-methyl-D-erythritol 4-phosphate cytidylyltransferase.